Consider the following 354-residue polypeptide: tRNA N6-adenosine threonylcarbamoyltransferase (354 aa).

Residues H111 and H115 each contribute to the Fe cation site. Residues 134-138 (LVSGG), D167, G180, and N279 contribute to the substrate site. A Fe cation-binding site is contributed by D319.

This sequence belongs to the KAE1 / TsaD family. Fe(2+) serves as cofactor.

The protein resides in the cytoplasm. It catalyses the reaction L-threonylcarbamoyladenylate + adenosine(37) in tRNA = N(6)-L-threonylcarbamoyladenosine(37) in tRNA + AMP + H(+). Functionally, required for the formation of a threonylcarbamoyl group on adenosine at position 37 (t(6)A37) in tRNAs that read codons beginning with adenine. Is involved in the transfer of the threonylcarbamoyl moiety of threonylcarbamoyl-AMP (TC-AMP) to the N6 group of A37, together with TsaE and TsaB. TsaD likely plays a direct catalytic role in this reaction. The sequence is that of tRNA N6-adenosine threonylcarbamoyltransferase from Neisseria meningitidis serogroup C / serotype 2a (strain ATCC 700532 / DSM 15464 / FAM18).